An 85-amino-acid chain; its full sequence is uncharacterized protein (85 aa).

A signal peptide spans 1-21 (MRPLLCALAGLALLCAVGALA). Over residues 22–35 (DGREDRGSPGDTGE) the composition is skewed to basic and acidic residues. Residues 22-85 (DGREDRGSPG…EVVHLPGSTL (64 aa)) are disordered. A compositionally biased stretch (low complexity) spans 36-51 (RPAGPARGPGLEPARG).

It localises to the secreted. This is an uncharacterized protein from Homo sapiens (Human).